The following is a 185-amino-acid chain: ATP synthase subunit delta (185 aa).

Belongs to the ATPase delta chain family. F-type ATPases have 2 components, F(1) - the catalytic core - and F(0) - the membrane proton channel. F(1) has five subunits: alpha(3), beta(3), gamma(1), delta(1), epsilon(1). CF(0) has four main subunits: a(1), b(1), b'(1) and c(10-14). The alpha and beta chains form an alternating ring which encloses part of the gamma chain. F(1) is attached to F(0) by a central stalk formed by the gamma and epsilon chains, while a peripheral stalk is formed by the delta, b and b' chains.

The protein localises to the cellular thylakoid membrane. In terms of biological role, f(1)F(0) ATP synthase produces ATP from ADP in the presence of a proton or sodium gradient. F-type ATPases consist of two structural domains, F(1) containing the extramembraneous catalytic core and F(0) containing the membrane proton channel, linked together by a central stalk and a peripheral stalk. During catalysis, ATP synthesis in the catalytic domain of F(1) is coupled via a rotary mechanism of the central stalk subunits to proton translocation. Its function is as follows. This protein is part of the stalk that links CF(0) to CF(1). It either transmits conformational changes from CF(0) to CF(1) or is implicated in proton conduction. The chain is ATP synthase subunit delta from Picosynechococcus sp. (strain ATCC 27264 / PCC 7002 / PR-6) (Agmenellum quadruplicatum).